We begin with the raw amino-acid sequence, 168 residues long: Photosystem I assembly protein Ycf3 (168 aa).

TPR repeat units lie at residues 35-68, 72-105, and 120-153; these read AFTY…EIDP, SYIL…NPFL, and GEQA…TPGN.

Belongs to the Ycf3 family.

It localises to the plastid. It is found in the chloroplast thylakoid membrane. Functionally, essential for the assembly of the photosystem I (PSI) complex. May act as a chaperone-like factor to guide the assembly of the PSI subunits. This is Photosystem I assembly protein Ycf3 from Oenothera elata subsp. hookeri (Hooker's evening primrose).